The chain runs to 145 residues: Transcription antitermination protein NusB (145 aa).

This sequence belongs to the NusB family.

Functionally, involved in transcription antitermination. Required for transcription of ribosomal RNA (rRNA) genes. Binds specifically to the boxA antiterminator sequence of the ribosomal RNA (rrn) operons. In Burkholderia cenocepacia (strain HI2424), this protein is Transcription antitermination protein NusB.